A 256-amino-acid polypeptide reads, in one-letter code: ATP synthase peripheral stalk subunit b, mitochondrial (256 aa).

A mitochondrion-targeting transit peptide spans 1–42; it reads MLSRVVLSAAATAAPSLKNAAFLGPGVLQATRTFHTGQPHLV. The residue at position 131 (Lys131) is an N6-succinyllysine. Lys139, Lys154, Lys162, Lys221, Lys233, and Lys244 each carry N6-acetyllysine.

This sequence belongs to the eukaryotic ATPase B chain family. In terms of assembly, component of the ATP synthase complex composed at least of ATP5F1A/subunit alpha, ATP5F1B/subunit beta, ATP5MC1/subunit c (homooctomer), MT-ATP6/subunit a, MT-ATP8/subunit 8, ATP5ME/subunit e, ATP5MF/subunit f, ATP5MG/subunit g, ATP5MK/subunit k, ATP5MJ/subunit j, ATP5F1C/subunit gamma, ATP5F1D/subunit delta, ATP5F1E/subunit epsilon, ATP5PF/subunit F6, ATP5PB/subunit b, ATP5PD/subunit d, ATP5PO/subunit OSCP. ATP synthase complex consists of a soluble F(1) head domain (subunits alpha(3) and beta(3)) - the catalytic core - and a membrane F(0) domain - the membrane proton channel (subunits c, a, 8, e, f, g, k and j). These two domains are linked by a central stalk (subunits gamma, delta, and epsilon) rotating inside the F1 region and a stationary peripheral stalk (subunits F6, b, d, and OSCP).

Its subcellular location is the mitochondrion. The protein resides in the mitochondrion inner membrane. In terms of biological role, subunit b, of the mitochondrial membrane ATP synthase complex (F(1)F(0) ATP synthase or Complex V) that produces ATP from ADP in the presence of a proton gradient across the membrane which is generated by electron transport complexes of the respiratory chain. ATP synthase complex consist of a soluble F(1) head domain - the catalytic core - and a membrane F(1) domain - the membrane proton channel. These two domains are linked by a central stalk rotating inside the F(1) region and a stationary peripheral stalk. During catalysis, ATP synthesis in the catalytic domain of F(1) is coupled via a rotary mechanism of the central stalk subunits to proton translocation. In vivo, can only synthesize ATP although its ATP hydrolase activity can be activated artificially in vitro. Part of the complex F(0) domain. Part of the complex F(0) domain and the peripheric stalk, which acts as a stator to hold the catalytic alpha(3)beta(3) subcomplex and subunit a/ATP6 static relative to the rotary elements. This is ATP synthase peripheral stalk subunit b, mitochondrial from Homo sapiens (Human).